A 487-amino-acid chain; its full sequence is Inosine-5'-monophosphate dehydrogenase (487 aa).

2 CBS domains span residues 93-149 and 153-214; these read IVSD…NKTV and MTPK…CKDE. NAD(+) contacts are provided by residues Asp-248, 248–250, and 298–300; these read DSS and GIG. Gly-300 and Gly-302 together coordinate K(+). Ser-303 is a binding site for IMP. Cys-305 contributes to the K(+) binding site. Cys-305 acts as the Thioimidate intermediate in catalysis. Residues 338 to 340, 361 to 362, and 385 to 389 contribute to the IMP site; these read DGG, GS, and YRGMG. Residue Arg-401 is the Proton acceptor of the active site. Glu-415 provides a ligand contact to IMP. K(+) is bound by residues Glu-469, Ser-470, and His-471.

The protein belongs to the IMPDH/GMPR family. Homotetramer. Requires K(+) as cofactor.

It carries out the reaction IMP + NAD(+) + H2O = XMP + NADH + H(+). The protein operates within purine metabolism; XMP biosynthesis via de novo pathway; XMP from IMP: step 1/1. Its activity is regulated as follows. Mycophenolic acid (MPA) is a non-competitive inhibitor that prevents formation of the closed enzyme conformation by binding to the same site as the amobile flap. In contrast, mizoribine monophosphate (MZP) is a competitive inhibitor that induces the closed conformation. MPA is a potent inhibitor of mammalian IMPDHs but a poor inhibitor of the bacterial enzymes. MZP is a more potent inhibitor of bacterial IMPDH. Its function is as follows. Catalyzes the conversion of inosine 5'-phosphate (IMP) to xanthosine 5'-phosphate (XMP), the first committed and rate-limiting step in the de novo synthesis of guanine nucleotides, and therefore plays an important role in the regulation of cell growth. The chain is Inosine-5'-monophosphate dehydrogenase from Pasteurella multocida (strain Pm70).